The following is a 474-amino-acid chain: 6-phospho-beta-galactosidase (474 aa).

D-galactose 6-phosphate contacts are provided by glutamine 19, histidine 116, asparagine 159, glutamate 160, and asparagine 297. The Proton donor role is filled by glutamate 160. Residue glutamate 375 is the Nucleophile of the active site. D-galactose 6-phosphate is bound by residues serine 433, tryptophan 434, lysine 440, and tyrosine 442.

It belongs to the glycosyl hydrolase 1 family.

The enzyme catalyses a 6-phospho-beta-D-galactoside + H2O = D-galactose 6-phosphate + an alcohol. It functions in the pathway carbohydrate metabolism; lactose degradation; D-galactose 6-phosphate and beta-D-glucose from lactose 6-phosphate: step 1/1. The polypeptide is 6-phospho-beta-galactosidase (Lacticaseibacillus casei (Lactobacillus casei)).